We begin with the raw amino-acid sequence, 177 residues long: Large ribosomal subunit protein uL6 (177 aa).

This sequence belongs to the universal ribosomal protein uL6 family. Part of the 50S ribosomal subunit.

Functionally, this protein binds to the 23S rRNA, and is important in its secondary structure. It is located near the subunit interface in the base of the L7/L12 stalk, and near the tRNA binding site of the peptidyltransferase center. The polypeptide is Large ribosomal subunit protein uL6 (Brucella melitensis biotype 1 (strain ATCC 23456 / CCUG 17765 / NCTC 10094 / 16M)).